Reading from the N-terminus, the 485-residue chain is N-succinylglutamate 5-semialdehyde dehydrogenase (485 aa).

220–225 (GSANTG) serves as a coordination point for NAD(+). Catalysis depends on residues glutamate 243 and cysteine 278.

Belongs to the aldehyde dehydrogenase family. AstD subfamily.

It carries out the reaction N-succinyl-L-glutamate 5-semialdehyde + NAD(+) + H2O = N-succinyl-L-glutamate + NADH + 2 H(+). The protein operates within amino-acid degradation; L-arginine degradation via AST pathway; L-glutamate and succinate from L-arginine: step 4/5. Catalyzes the NAD-dependent reduction of succinylglutamate semialdehyde into succinylglutamate. This is N-succinylglutamate 5-semialdehyde dehydrogenase from Aliivibrio salmonicida (strain LFI1238) (Vibrio salmonicida (strain LFI1238)).